Consider the following 2353-residue polypeptide: Nonribosomal peptide synthetase 7 (2353 aa).

Residues 305–684 (TFSALNTRAN…AIEEVEDSAV (380 aa)) form an adenylation 1 region. Positions 776-853 (RDLTDSEKVV…QVAAAVQPQP (78 aa)) constitute a Carrier 1 domain. Serine 813 is modified (O-(pantetheine 4'-phosphoryl)serine). A condensation 1 region spans residues 885–1147 (EDAFPVTPFQ…LMVAPLRVKV (263 aa)). Positions 1338–1725 (TYAGLAIKMN…QTNVFRQCAV (388 aa)) are adenylation 2. Residues 1826–1902 (EICSEAEREL…EQAALMVQGQ (77 aa)) enclose the Carrier 2 domain. Serine 1863 carries the post-translational modification O-(pantetheine 4'-phosphoryl)serine. The segment at 1939-2214 (EDIYPCSPGQ…NGNCANFLPY (276 aa)) is condensation 2.

The protein belongs to the NRP synthetase family.

Nonribosomal peptide synthesis (NRPS) is a key mechanism responsible for the biosynthesis of bioactive metabolites which are potentially contributing to organismal virulence. This Aspergillus fumigatus (strain ATCC MYA-4609 / CBS 101355 / FGSC A1100 / Af293) (Neosartorya fumigata) protein is Nonribosomal peptide synthetase 7 (NRPS7).